Consider the following 129-residue polypeptide: Large ribosomal subunit protein bL12c (129 aa).

It belongs to the bacterial ribosomal protein bL12 family. As to quaternary structure, homodimer. Part of the ribosomal stalk of the 50S ribosomal subunit. Forms a multimeric L10(L12)X complex, where L10 forms an elongated spine to which 2 to 4 L12 dimers bind in a sequential fashion. Binds GTP-bound translation factors.

It localises to the plastid. It is found in the chloroplast. Its function is as follows. Forms part of the ribosomal stalk which helps the ribosome interact with GTP-bound translation factors. Is thus essential for accurate translation. The protein is Large ribosomal subunit protein bL12c of Pyropia yezoensis (Susabi-nori).